Here is a 257-residue protein sequence, read N- to C-terminus: Sulfur carrier protein FdhD (257 aa).

Cys-105 (cysteine persulfide intermediate) is an active-site residue.

This sequence belongs to the FdhD family.

It is found in the cytoplasm. Required for formate dehydrogenase (FDH) activity. Acts as a sulfur carrier protein that transfers sulfur from IscS to the molybdenum cofactor prior to its insertion into FDH. The protein is Sulfur carrier protein FdhD of Saccharolobus solfataricus (strain ATCC 35092 / DSM 1617 / JCM 11322 / P2) (Sulfolobus solfataricus).